The following is a 78-amino-acid chain: Chassatide C4 (78 aa).

The signal sequence occupies residues 1-23; the sequence is MAKFATQLFLLTASVVMLEVQSS. Positions 24–42 are cleaved as a propeptide — removed in mature form; the sequence is IVIMQDPDLGRKLIMNPAN. Residues 43–71 constitute a cross-link (cyclopeptide (Gly-Asn)); that stretch reads GASCGETCFTGICFTAGCSCNPWPTCTRN. Intrachain disulfides connect cysteine 46/cysteine 60, cysteine 50/cysteine 62, and cysteine 55/cysteine 68. The propeptide at 72 to 78 is removed in mature form; sequence GLNPESI.

This is a cyclic peptide.

Its function is as follows. Probably participates in a plant defense mechanism. The polypeptide is Chassatide C4 (Chassalia chartacea (Chassalia curviflora)).